Here is a 345-residue protein sequence, read N- to C-terminus: Uroporphyrinogen decarboxylase (345 aa).

Substrate contacts are provided by residues 27–31, phenylalanine 46, aspartate 76, tyrosine 152, serine 207, and histidine 320; that span reads RQAGR.

The protein belongs to the uroporphyrinogen decarboxylase family. As to quaternary structure, homodimer.

It localises to the cytoplasm. It catalyses the reaction uroporphyrinogen III + 4 H(+) = coproporphyrinogen III + 4 CO2. Its pathway is porphyrin-containing compound metabolism; protoporphyrin-IX biosynthesis; coproporphyrinogen-III from 5-aminolevulinate: step 4/4. Functionally, catalyzes the decarboxylation of four acetate groups of uroporphyrinogen-III to yield coproporphyrinogen-III. The polypeptide is Uroporphyrinogen decarboxylase (Geobacillus kaustophilus (strain HTA426)).